The sequence spans 472 residues: Transcription factor TGAL1 (472 aa).

The tract at residues 136-190 (WGESTIADTSPRTDTSTDPDTDERNQMFEQGQLAAPTASDSSDRSKDKLDHKTLR) is disordered. The segment covering 143 to 153 (DTSPRTDTSTD) has biased composition (low complexity). A compositionally biased stretch (basic and acidic residues) spans 176-187 (SSDRSKDKLDHK). The bZIP domain maps to 185 to 229 (DHKTLRRLAQNREAARKSRLRKKAYIQNLESSRLKLTQIEQELQR). The tract at residues 187–207 (KTLRRLAQNREAARKSRLRKK) is basic motif. Residues 213-227 (LESSRLKLTQIEQEL) are leucine-zipper. Positions 252–469 (ALAFDMEYAR…RALSSLWLAR (218 aa)) constitute a DOG1 domain.

The protein belongs to the bZIP family. In terms of assembly, isoforms 1 and 2 interact with NPR2/NH2. Isoform 2 interacts with NPR1/NH1 and NPR3/NH3.

The protein resides in the nucleus. Transcriptional regulator involved in defense response. The chain is Transcription factor TGAL1 from Oryza sativa subsp. japonica (Rice).